The primary structure comprises 89 residues: Large ribosomal subunit protein bL28 (89 aa).

Belongs to the bacterial ribosomal protein bL28 family.

The polypeptide is Large ribosomal subunit protein bL28 (Chlamydia muridarum (strain MoPn / Nigg)).